Reading from the N-terminus, the 441-residue chain is Aminopeptidase C (441 aa).

Residues cysteine 70, histidine 361, and asparagine 382 contribute to the active site.

The protein belongs to the peptidase C1 family.

It carries out the reaction Inactivates bleomycin B2 (a cytotoxic glycometallopeptide) by hydrolysis of a carboxyamide bond of beta-aminoalanine, but also shows general aminopeptidase activity. The specificity varies somewhat with source, but amino acid arylamides of Met, Leu and Ala are preferred.. The protein is Aminopeptidase C (pepC) of Listeria monocytogenes serovar 1/2a (strain ATCC BAA-679 / EGD-e).